Reading from the N-terminus, the 602-residue chain is Glutamine--fructose-6-phosphate aminotransferase [isomerizing] (602 aa).

The active-site Nucleophile; for GATase activity is the cysteine 2. One can recognise a Glutamine amidotransferase type-2 domain in the interval 2–222 (CGIFGIIFAE…DGEYGYITAG (221 aa)). SIS domains are found at residues 284–422 (VANA…ALGH) and 452–592 (LAKR…PDKP). Lysine 597 functions as the For Fru-6P isomerization activity in the catalytic mechanism.

In terms of assembly, homodimer.

It localises to the cytoplasm. It catalyses the reaction D-fructose 6-phosphate + L-glutamine = D-glucosamine 6-phosphate + L-glutamate. Catalyzes the first step in hexosamine metabolism, converting fructose-6P into glucosamine-6P using glutamine as a nitrogen source. This is Glutamine--fructose-6-phosphate aminotransferase [isomerizing] from Pyrobaculum aerophilum (strain ATCC 51768 / DSM 7523 / JCM 9630 / CIP 104966 / NBRC 100827 / IM2).